A 464-amino-acid chain; its full sequence is MSRSTHASGHMETVQVISALTDYIDQSKFAEIHSKLKRGDGPGESGKSTIFQIIGIAGRPSLSKSSEFSLKATEITLLSTCYHMLPDDYFGLLPLSSASVNATSTLLSTATISRPSFSVQTSSSTFANFLMSGTSWRSRRQRLKIVDVGGQRSQRRKLTAELAQDIKALWADPGIQNTFQRSSEFQLNDSAAYYFDSIDRISQPLYLPSENDVLRSRTKTTGIIETVFEIQNSTFRMVDVGGQRELANAHTELNNPIVQREEFVKQLRNRDKGDDESMEIDEGFVAALEHALPPTGGWGLGIDRLVMFLTSQSNIKEVLLFPAMKPEGKNAISYPPGTRCSMVRVFPCCSSTLTFSFCFFFSPFFMTVILFVEAAAMKVRGGYSGTCLSVSPRFSNGGDVLWRTSETKRDKYNEKRHAAVKTPAQRSFLESGWNTASDVKCCSIRRFPYLPLPLSSSPFRFPPP.

The G-alpha domain occupies 33–415; that stretch reads HSKLKRGDGP…ETKRDKYNEK (383 aa). Residues 36 to 49 form a G1 motif region; sequence LKRGDGPGESGKST. GTP-binding positions include 41 to 48, 147 to 151, 214 to 220, 239 to 243, 268 to 271, and 310 to 313; these read GPGESGKS, DVGGQ, LRSRTKT, RNRD, and TSQS. Mg(2+) is bound at residue serine 48. Residues 212–220 form a G2 motif region; it reads DVLRSRTKT. Threonine 220 contributes to the Mg(2+) binding site. Positions 235–244 are G3 motif; sequence FRMVDVGGQR. A G4 motif region spans residues 306–313; that stretch reads VMFLTSQS. A G5 motif region spans residues 382–387; it reads GYSGTC.

It in the N-terminal section; belongs to the G-alpha family. This sequence in the C-terminal section; belongs to the class-II aminoacyl-tRNA synthetase family. In terms of assembly, g proteins are composed of 3 units; alpha, beta and gamma. The alpha chain contains the guanine nucleotide binding site.

Functionally, guanine nucleotide-binding proteins (G proteins) are involved as modulators or transducers in various transmembrane signaling systems. This is Putative guanine nucleotide-binding protein subunit alpha from Leishmania donovani.